We begin with the raw amino-acid sequence, 62 residues long: Large ribosomal subunit protein uL30 (62 aa).

It belongs to the universal ribosomal protein uL30 family. As to quaternary structure, part of the 50S ribosomal subunit.

This is Large ribosomal subunit protein uL30 from Beutenbergia cavernae (strain ATCC BAA-8 / DSM 12333 / CCUG 43141 / JCM 11478 / NBRC 16432 / NCIMB 13614 / HKI 0122).